Consider the following 573-residue polypeptide: MTPATARDATERDATDTDVVIVGAGPVGLTLANILGLQGVRTMIVEERATLIDYPRGVGLDDEALRTFQAIGLVDKVLPHTVPNQILRFFDGNRRLLAEMAPPDARFGWPKRNGFVQPMVDAELHAGLARFPHVEVRWGHRMAECEETADGVTVRLDGDPTPVRARYLVGCDGGRSATRRLMGVSFDGTTSPTRWLVVDIANDPLGHPNSEVGADPARPYASISIAHGIRRFEFMIHADETDEQAEDPAFIHRMLGLLVPHPERVEVIRHRVYTHHSRIAGAFRKGRMFLAGDAAHLMPVWQGQGYNSGIRDAANLGWKLAAVVDGRAGDALLDTYDVERRKHARAMIDLSTMVGRVISPTNRRVAAVRDKLIRGASVVPTLKRYVLEMRFKPMPRYEQGAVFHPEAPSPTSPAGTLFIQPRVDTRDAQNVLLDEVLGTGFAVLCWNNNPRALLGADLFDRWKALGARFVAARPLTQLHWTGHDDPDVTVIGDRTGALKGWFDAHAESVLFLRPDRCIAGACIAQRAPEVSTALFGVLHLTQGGGNGHHGADRPVLHVAQSATEPSGTVAGTP.

FAD contacts are provided by residues 18-47 (DVVIVGAGPVGLTLANILGLQGVRTMIVEE) and 283-293 (FRKGRMFLAGD).

It belongs to the PheA/TfdB FAD monooxygenase family. FAD is required as a cofactor.

It carries out the reaction 3-(3-hydroxyphenyl)propanoate + NADH + O2 + H(+) = 3-(2,3-dihydroxyphenyl)propanoate + NAD(+) + H2O. It catalyses the reaction (2E)-3-(3-hydroxyphenyl)prop-2-enoate + NADH + O2 + H(+) = (2E)-3-(2,3-dihydroxyphenyl)prop-2-enoate + NAD(+) + H2O. It participates in aromatic compound metabolism; 3-phenylpropanoate degradation. Catalyzes the insertion of one atom of molecular oxygen into position 2 of the phenyl ring of 3-(3-hydroxyphenyl)propionate (3-HPP) and hydroxycinnamic acid (3HCI). The protein is 3-(3-hydroxy-phenyl)propionate/3-hydroxycinnamic acid hydroxylase of Mycobacterium sp. (strain KMS).